A 105-amino-acid polypeptide reads, in one-letter code: Cell division protein FtsB (105 aa).

The Cytoplasmic portion of the chain corresponds to 1 to 3 (MRI). The helical transmembrane segment at 4–21 (VIYSMLVLLIAIQYPLWL) threads the bilayer. Over 22-105 (GKGGWLKVYE…DTAKASTVKQ (84 aa)) the chain is Periplasmic. The stretch at 32–60 (MEKQVELQEAKNSLLALRNAKLEGDVKDL) forms a coiled coil.

The protein belongs to the FtsB family. In terms of assembly, part of a complex composed of FtsB, FtsL and FtsQ.

Its subcellular location is the cell inner membrane. Essential cell division protein. May link together the upstream cell division proteins, which are predominantly cytoplasmic, with the downstream cell division proteins, which are predominantly periplasmic. The chain is Cell division protein FtsB from Polynucleobacter asymbioticus (strain DSM 18221 / CIP 109841 / QLW-P1DMWA-1) (Polynucleobacter necessarius subsp. asymbioticus).